A 309-amino-acid polypeptide reads, in one-letter code: Taste receptor type 2 member 8 (309 aa).

Over 1–7 (MFSPADN) the chain is Extracellular. The helical transmembrane segment at 8–28 (IFIILITGEFILGILGNGYIA) threads the bilayer. At 29–50 (LVNWIDWIKKKKISTVDYILTN) the chain is on the cytoplasmic side. A helical membrane pass occupies residues 51–71 (LVIARICLISVMVVNGIVIVL). The Extracellular portion of the chain corresponds to 72–82 (NPDVYTKNKQQ). The chain crosses the membrane as a helical span at residues 83–103 (IVIFTFWTFANYLNMWITTCL). At 104-131 (NVFYFLKIASSSHPLFLWLKWKIDMVVH) the chain is on the cytoplasmic side. Residues 132 to 152 (WILLGCFAISLLVSLIAAIVL) form a helical membrane-spanning segment. Topologically, residues 153–184 (SCDYRFHAIAKHKRNITEMFHVSKXPYFEPLT) are extracellular. A glycan (N-linked (GlcNAc...) asparagine) is linked at Asn-167. A helical membrane pass occupies residues 185–205 (LFNLFAIVPFIVSLISFFLLV). Over 206-239 (RSLWRHTKQIKLYATGSRDPSTEVHVRAIKTMTS) the chain is Cytoplasmic. The helical transmembrane segment at 240–260 (FIFFFFLYFISSILMTFSYLM) threads the bilayer. Over 261-266 (TKYKLA) the chain is Extracellular. A helical transmembrane segment spans residues 267–287 (VEFGEIAAILYPLGHSLILIV). Over 288–309 (LNNKLRQIFVRMLTCRKIACVI) the chain is Cytoplasmic.

This sequence belongs to the G-protein coupled receptor T2R family.

The protein resides in the membrane. Functionally, receptor that may play a role in the perception of bitterness and is gustducin-linked. May play a role in sensing the chemical composition of the gastrointestinal content. The activity of this receptor may stimulate alpha gustducin, mediate PLC-beta-2 activation and lead to the gating of TRPM5. This chain is Taste receptor type 2 member 8 (TAS2R8), found in Pan paniscus (Pygmy chimpanzee).